Reading from the N-terminus, the 65-residue chain is Large ribosomal subunit protein uL30 (65 aa).

This sequence belongs to the universal ribosomal protein uL30 family. As to quaternary structure, part of the 50S ribosomal subunit.

This is Large ribosomal subunit protein uL30 from Chloroflexus aurantiacus (strain ATCC 29366 / DSM 635 / J-10-fl).